Reading from the N-terminus, the 399-residue chain is uncharacterized protein (399 aa).

A run of 11 helical transmembrane segments spans residues 19-39 (IFSI…PLFV), 46-66 (VNLL…LLMY), 91-111 (FYTI…PILG), 123-143 (QFEQ…IIAS), 146-166 (IYAK…IFIA), 183-203 (LLSA…ISYI), 225-247 (VAIL…MPIW), 283-303 (VLLL…LLGF), 307-327 (FGLD…FAYL), 335-355 (LFSI…YLGY), and 369-389 (IEYT…VYLL).

It localises to the host membrane. Putative amino acid transporter. This is an uncharacterized protein from Saccharolobus islandicus (Sulfolobus islandicus).